We begin with the raw amino-acid sequence, 249 residues long: Methylthioribulose-1-phosphate dehydratase (249 aa).

Zn(2+) contacts are provided by His103 and His105.

It belongs to the aldolase class II family. MtnB subfamily. Zn(2+) serves as cofactor.

It catalyses the reaction 5-(methylsulfanyl)-D-ribulose 1-phosphate = 5-methylsulfanyl-2,3-dioxopentyl phosphate + H2O. It functions in the pathway amino-acid biosynthesis; L-methionine biosynthesis via salvage pathway; L-methionine from S-methyl-5-thio-alpha-D-ribose 1-phosphate: step 2/6. Functionally, catalyzes the dehydration of methylthioribulose-1-phosphate (MTRu-1-P) into 2,3-diketo-5-methylthiopentyl-1-phosphate (DK-MTP-1-P). This is Methylthioribulose-1-phosphate dehydratase from Leptospira interrogans serogroup Icterohaemorrhagiae serovar copenhageni (strain Fiocruz L1-130).